The primary structure comprises 267 residues: Proteasome assembly chaperone 2 (267 aa).

Belongs to the PSMG2 family. In terms of assembly, component of the 20S proteasome chaperone. Forms a heterodimer with PBA1 that binds to proteasome precursors.

The protein localises to the cytoplasm. In terms of biological role, involved in 20S proteasome assembly. Required for maximal proteasome activity. Affects the chymotrypsin-like activity of the proteasome. Can be degraded by the proteasome. Involved in the endoplasmic reticulum-associated degradation (ERAD). The chain is Proteasome assembly chaperone 2 (ADD66) from Saccharomyces cerevisiae (strain ATCC 204508 / S288c) (Baker's yeast).